The following is a 640-amino-acid chain: ATP-dependent rRNA helicase spb4 (640 aa).

The short motif at 14–42 (WDAVTPALSEWVLEAMSSMGFTRMTPVQA) is the Q motif element. One can recognise a Helicase ATP-binding domain in the interval 45–249 (IPLFMAHKDV…RVGLRNPVKV (205 aa)). Residue 58–65 (AVTGSGKT) coordinates ATP. Residues 197 to 200 (DEAD) carry the DEAD box motif. One can recognise a Helicase C-terminal domain in the interval 283–437 (ALKRIVSSVQ…SISFSDADAA (155 aa)). The stretch at 521–629 (AYKDKQREKR…VAKAAGAKAD (109 aa)) forms a coiled coil. 2 disordered regions span residues 531–593 (RKEL…EEEK) and 607–640 (RKKNEEERRLRRAVAKAAGAKADGDDEEEFQGFD). Positions 577–593 (KSKQEKARWEKMTEEEK) are enriched in basic and acidic residues. The segment covering 630–640 (GDDEEEFQGFD) has biased composition (acidic residues).

This sequence belongs to the DEAD box helicase family. DDX55/SPB4 subfamily. As to quaternary structure, component of pre-60S ribosomal complexes.

The protein resides in the nucleus. It localises to the nucleolus. The enzyme catalyses ATP + H2O = ADP + phosphate + H(+). ATP-binding RNA helicase involved in the biogenesis of 60S ribosomal subunits. Binds 90S pre-ribosomal particles and dissociates from pre-60S ribosomal particles after processing of 27SB pre-rRNA. Required for the normal formation of 18S rRNA through the processing of pre-rRNAs at sites A0, A1 and A2, and the normal formation of 25S and 5.8S rRNAs through the processing of pre-rRNAs at sites C1 and C2. The sequence is that of ATP-dependent rRNA helicase spb4 from Aspergillus fumigatus (strain ATCC MYA-4609 / CBS 101355 / FGSC A1100 / Af293) (Neosartorya fumigata).